The following is a 337-amino-acid chain: Putative 4-hydroxythreonine-4-phosphate dehydrogenase (337 aa).

Residues histidine 172, histidine 216, and histidine 271 each contribute to the a divalent metal cation site.

This sequence belongs to the PdxA family. Homodimer. Zn(2+) is required as a cofactor. Requires Mg(2+) as cofactor. It depends on Co(2+) as a cofactor.

Its subcellular location is the cytoplasm. It catalyses the reaction 4-(phosphooxy)-L-threonine + NAD(+) = 3-amino-2-oxopropyl phosphate + CO2 + NADH. The protein operates within cofactor biosynthesis; pyridoxine 5'-phosphate biosynthesis; pyridoxine 5'-phosphate from D-erythrose 4-phosphate: step 4/5. Its function is as follows. Catalyzes the NAD(P)-dependent oxidation of 4-(phosphooxy)-L-threonine (HTP) into 2-amino-3-oxo-4-(phosphooxy)butyric acid which spontaneously decarboxylates to form 3-amino-2-oxopropyl phosphate (AHAP). The protein is Putative 4-hydroxythreonine-4-phosphate dehydrogenase of Pasteurella multocida (strain Pm70).